The sequence spans 158 residues: Eukaryotic translation initiation factor 5A-1 (158 aa).

Over residues 1 to 10 the composition is skewed to basic and acidic residues; that stretch reads MSDEEHHFES. The segment at 1 to 21 is disordered; sequence MSDEEHHFESSDAGASKTYPQ. Residue Ser-2 is modified to Phosphoserine. The residue at position 51 (Lys-51) is a Hypusine.

The protein belongs to the eIF-5A family. Post-translationally, lys-51 undergoes hypusination, a unique post-translational modification that consists in the addition of a butylamino group from spermidine to lysine side chain, leading to the formation of the unusual amino acid hypusine. eIF-5As are the only known proteins to undergo this modification, which is essential for their function. Expressed in leaf vasculature and inflorescence stems. Present in xylem tissue but not in phloem, and in developing vessel members, but not in mature vessels members. Detected in anthers.

Translation factor that promotes translation elongation and termination, particularly upon ribosome stalling at specific amino acid sequence contexts. Binds between the exit (E) and peptidyl (P) site of the ribosome and promotes rescue of stalled ribosome: specifically required for efficient translation of polyproline-containing peptides as well as other motifs that stall the ribosome. Acts as a ribosome quality control (RQC) cofactor by joining the RQC complex to facilitate peptidyl transfer during CAT tailing step. Involved in xylogenesis. This is Eukaryotic translation initiation factor 5A-1 (ELF5A-1) from Arabidopsis thaliana (Mouse-ear cress).